Consider the following 428-residue polypeptide: Adenylosuccinate synthetase (428 aa).

Residues 12–18 (GDEGKGK) and 40–42 (GHT) contribute to the GTP site. Asp-13 acts as the Proton acceptor in catalysis. Mg(2+)-binding residues include Asp-13 and Gly-40. IMP contacts are provided by residues 13–16 (DEGK), 38–41 (NAGH), Thr-128, Arg-142, Gln-223, Thr-238, and Arg-302. His-41 acts as the Proton donor in catalysis. Residue 298–304 (TTTGRPR) participates in substrate binding. GTP-binding positions include Arg-304, 330–332 (KLD), and 412–414 (SVG).

Belongs to the adenylosuccinate synthetase family. Homodimer. Mg(2+) serves as cofactor.

Its subcellular location is the cytoplasm. It carries out the reaction IMP + L-aspartate + GTP = N(6)-(1,2-dicarboxyethyl)-AMP + GDP + phosphate + 2 H(+). It functions in the pathway purine metabolism; AMP biosynthesis via de novo pathway; AMP from IMP: step 1/2. Functionally, plays an important role in the de novo pathway of purine nucleotide biosynthesis. Catalyzes the first committed step in the biosynthesis of AMP from IMP. This is Adenylosuccinate synthetase from Brevibacillus brevis (strain 47 / JCM 6285 / NBRC 100599).